The primary structure comprises 460 residues: NADH-ubiquinone oxidoreductase chain 4 (460 aa).

Helical transmembrane passes span 22-42 (WLWPITTTHSLLIALLSLLWF), 59-79 (IDPLSAPLLILTCWLLPLMIL), 93-113 (QRIYITLLISLQTFLIMAFSA), 114-134 (TELIMFYIMFEATLIPTLIII), 148-168 (TYFLFYTLIGSLPLLVALLLM), 195-215 (FWWTACLIAFLVKMPLYGVHL), 225-245 (PIAGSMILAAVLLKLGGYGMM), 258-278 (MAYPFLILAIWGVIMTSSICL), 286-306 (LIAYSSVSHMGLVAGAIMIQT), 310-330 (FAGAITLMIAHGLVSSALFCL), 351-371 (VMLPLMATWWFIANLANLALP), 394-414 (ILLTGLGVLITASYSLYMFLM), and 440-460 (LHLIPMLLLILKPELIWGWTF).

The protein belongs to the complex I subunit 4 family.

Its subcellular location is the mitochondrion membrane. The catalysed reaction is a ubiquinone + NADH + 5 H(+)(in) = a ubiquinol + NAD(+) + 4 H(+)(out). Its function is as follows. Core subunit of the mitochondrial membrane respiratory chain NADH dehydrogenase (Complex I) that is believed to belong to the minimal assembly required for catalysis. Complex I functions in the transfer of electrons from NADH to the respiratory chain. The immediate electron acceptor for the enzyme is believed to be ubiquinone. This is NADH-ubiquinone oxidoreductase chain 4 (MT-ND4) from Squalus acanthias (Spiny dogfish).